Consider the following 766-residue polypeptide: Disabled homolog 2 (766 aa).

Residues 1–16 (MSNEVETSTTNGQPDQ) show a composition bias toward polar residues. The disordered stretch occupies residues 1–36 (MSNEVETSTTNGQPDQQAAPKAPSKKEKKKGSEKTD). Ser2 is modified (N-acetylserine). A Phosphoserine modification is found at Ser2. Positions 45-196 (GDGVKYKAKL…KAEENGSEAL (152 aa)) constitute a PID domain. Tyr170 bears the Phosphotyrosine mark. Ser193 is modified (phosphoserine). The segment at 230-447 (ESKDILLVDL…KPGRGRRTAK (218 aa)) is required for localization to clathrin-coated pits. Disordered stretches follow at residues 284-482 (LNFF…NFLD), 596-630 (PPPTMSTQSSPQPMMSSVLATPPQPPPRNGPLKDI), 659-683 (RQPPLVPSRKGETPPSGTSSAFSSY), and 699-766 (DFDA…NPFA). 2 consecutive short sequence motifs (DPF) follow at residues 293 to 295 (DPF) and 298 to 300 (DPF). 2 stretches are compositionally biased toward polar residues: residues 303–334 (PDQSAPSSFDSLTSPDQKKASLSSSSTPQSKG) and 367–381 (PSSQTQQAVRTQNGV). Ser323 carries the phosphoserine modification. Phosphoserine; in mitosis is present on residues Ser326 and Ser328. Position 401 is a phosphoserine (Ser401). Residues 467–480 (MSPTGQPAVPQSNF) show a composition bias toward polar residues. Positions 600–612 (MSTQSSPQPMMSS) are enriched in low complexity. Residues 600 to 730 (MSTQSSPQPM…VLLGTKSADN (131 aa)) are sufficient for interaction with GRB2. The segment at 617–625 (PPQPPPRNG) is required for interaction with CSK. The interval 647–766 (KEVKEMFKDF…HRSPFGNPFA (120 aa)) is required for interaction with MYO6. The required for interaction with GRB2 and CSK stretch occupies residues 661–669 (PPLVPSRKG). Thr671 is modified (phosphothreonine). Positions 673–683 (PSGTSSAFSSY) are enriched in polar residues. Residues 707-723 (NKINEPPKPAPRQGVLL) are sufficient for interaction with SH3KBP1 SH3 domain. Residues Ser727 and Ser759 each carry the phosphoserine modification. Positions 727-753 (SADNSLENPFSKGFSSSNPSVVSQPAS) are enriched in polar residues.

As to quaternary structure, interacts (via NPXY motif) with DAB2 (via PID domain). Can interact (via PID domain) with LDLR, APP, APLP1 and APLP2, and weakly with INPP5D (via NPXY motifs); the interaction is impaired by tyrosine phosphorylation of the respective NPXY motifs. Can weakly interact (via PID domain) with LRP1 (via NPXY motif); the interaction is enhanced by tyrosine phosphorylation of the NPXY motif. Interacts with LRP2 (via NPXY motif); the interaction is not affected by tyrosine phosphorylation of the NPXY motif. Interacts with clathrin; in vitro can assemble clathrin triskelia into polyhedral coats. Interacts with AP2A2, ITGB1, ITGB3, ITGB5, PIAS2, DAB2IP, NOSTRIN, FCHO1, DVL3 and EPS15L1. Interacts with SH3KBP1 (via SH3 domains). Interacts with GRB2; competes with SOS1 for binding to GRB2 and the interaction is enhanced by EGF and NT-3 stimulation. Isoform p96 interacts with EPS15 and ITSN1; isoform p67 does not interact with EPS15 and only weakly interacts with ITSN1. Interacts with MAP3K7; the interaction is induced by TGF-beta stimulation and may mediate TGF-beta stimulated JNK activation. Interacts with AXIN1 and PPP1CA; the interactions are mutually exclusive. Interacts with the globular tail of MYO6. Interacts (via DPF motifs) with FCHO2; the interaction is direct and required for DAB2-mediated LDLR endocytosis. Interacts with LRP6; the interaction involves LRP6 phosphorylation by CK2 and sequesters LRP6 towards clathrin-mediated endocytosis. Associates with the TGF-beta receptor complex. Interacts with SMAD2 and SMAD3; the interactions are enhanced upon TGF-beta stimulation. Interacts with GRB2; the interaction is enhanced by EGF and NT-3 stimulation. Interacts with SRC; the interaction is enhanced by EGF stimulation. In terms of processing, phosphorylated on serine residues in response to mitogenic growth-factor stimulation. Phosphorylation during mitosis is leading to membrane displacement. As to expression, isoform p96 and isoform p67 are expressed in adult kidney and fibroblasts with isoform p96 being the predominant form. Isoform p67 is the predominant isoform expressed in embryonic visceral endoderm.

It localises to the cytoplasmic vesicle. It is found in the clathrin-coated vesicle membrane. Its subcellular location is the membrane. The protein resides in the clathrin-coated pit. The protein localises to the cytoplasm. It localises to the nucleus. Functionally, adapter protein that functions as a clathrin-associated sorting protein (CLASP) required for clathrin-mediated endocytosis of selected cargo proteins. Can bind and assemble clathrin, and binds simultaneously to phosphatidylinositol 4,5-bisphosphate (PtdIns(4,5)P2) and cargos containing non-phosphorylated NPXY internalization motifs, such as the LDL receptor, to recruit them to clathrin-coated pits. Can function in clathrin-mediated endocytosis independently of the AP-2 complex. Involved in endocytosis of integrin beta-1; this function seems to redundant with the AP-2 complex and seems to require DAB2 binding to endocytosis accessory EH domain-containing proteins such as EPS15, EPS15L1 and ITSN1. Involved in endocytosis of cystic fibrosis transmembrane conductance regulator/CFTR. Isoform p96 is involved in endocytosis of megalin/LRP2 lipoprotein receptor during embryonal development. Required for recycling of the TGF-beta receptor. Isoform p67 is not involved in LDL receptor endocytosis. Involved in CFTR trafficking to the late endosome. Involved in several receptor-mediated signaling pathways. Involved in TGF-beta receptor signaling and facilitates phosphorylation of the signal transducer SMAD2. Mediates TFG-beta-stimulated JNK activation. May inhibit the canoniocal Wnt/beta-catenin signaling pathway by stabilizing the beta-catenin destruction complex through a competing association with axin preventing its dephosphorylation through protein phosphatase 1 (PP1). Sequesters LRP6 towards clathrin-mediated endocytosis, leading to inhibition of Wnt/beta-catenin signaling. May activate non-canonical Wnt signaling. In cell surface growth factor/Ras signaling pathways proposed to inhibit ERK activation by interrupting the binding of GRB2 to SOS1 and to inhibit SRC by preventing its activating phosphorylation at 'Tyr-419'. Proposed to be involved in modulation of androgen receptor (AR) signaling mediated by SRC activation; seems to compete with AR for interaction with SRC. Plays a role in the CSF-1 signal transduction pathway. Plays a role in cellular differentiation. Involved in cell positioning and formation of visceral endoderm (VE) during embryogenesis and proposed to be required in the VE to respond to Nodal signaling coming from the epiblast. Required for the epithelial to mesenchymal transition, a process necessary for proper embryonic development. May be involved in myeloid cell differentiation and can induce macrophage adhesion and spreading. Isoform p67 may be involved in transcriptional regulation. May act as a tumor suppressor. The chain is Disabled homolog 2 (Dab2) from Mus musculus (Mouse).